The primary structure comprises 328 residues: RNA 3'-terminal phosphate cyclase (328 aa).

ATP contacts are provided by residues glutamine 100 and histidine 276–glutamine 280. The active-site Tele-AMP-histidine intermediate is histidine 302.

Belongs to the RNA 3'-terminal cyclase family. Type 1 subfamily.

It is found in the cytoplasm. The catalysed reaction is a 3'-end 3'-phospho-ribonucleotide-RNA + ATP = a 3'-end 2',3'-cyclophospho-ribonucleotide-RNA + AMP + diphosphate. Functionally, catalyzes the conversion of 3'-phosphate to a 2',3'-cyclic phosphodiester at the end of RNA. The mechanism of action of the enzyme occurs in 3 steps: (A) adenylation of the enzyme by ATP; (B) transfer of adenylate to an RNA-N3'P to produce RNA-N3'PP5'A; (C) and attack of the adjacent 2'-hydroxyl on the 3'-phosphorus in the diester linkage to produce the cyclic end product. The biological role of this enzyme is unknown but it is likely to function in some aspects of cellular RNA processing. The protein is RNA 3'-terminal phosphate cyclase (rtcA) of Archaeoglobus fulgidus (strain ATCC 49558 / DSM 4304 / JCM 9628 / NBRC 100126 / VC-16).